A 79-amino-acid polypeptide reads, in one-letter code: Pigment-dispersing hormone type 1 (79 aa).

A signal peptide spans Met1–Ala22. Position 76 is an alanine amide (Ala76).

Belongs to the arthropod PDH family. In terms of tissue distribution, eyestalk.

It is found in the secreted. In terms of biological role, the pigment-dispersing hormone causes the migration of the distal retinal pigment into the proximal end of the pigment chromatophore cells and thus decreases the amount of light entering the retinulas. May also function as a neurotransmitter and/or neuromodulator. This is Pigment-dispersing hormone type 1 (PDH1) from Penaeus vannamei (Whiteleg shrimp).